The following is a 153-amino-acid chain: Aspartate carbamoyltransferase regulatory chain (153 aa).

The Zn(2+) site is built by cysteine 109, cysteine 114, cysteine 138, and cysteine 141.

This sequence belongs to the PyrI family. In terms of assembly, contains catalytic and regulatory chains. Zn(2+) is required as a cofactor.

Functionally, involved in allosteric regulation of aspartate carbamoyltransferase. The polypeptide is Aspartate carbamoyltransferase regulatory chain (Salmonella paratyphi A (strain ATCC 9150 / SARB42)).